A 331-amino-acid chain; its full sequence is ADP-L-glycero-D-manno-heptose-6-epimerase (331 aa).

Residues 11–12 (FI), 32–33 (DN), K39, K54, 75–79 (EGACS), and N92 contribute to the NADP(+) site. Y139 (proton acceptor) is an active-site residue. Position 143 (K143) interacts with NADP(+). Substrate is bound at residue N168. Residues V169 and K177 each contribute to the NADP(+) site. The active-site Proton acceptor is K177. Substrate contacts are provided by residues R179, H186, 200 to 203 (FGEY), R213, and Y292.

Belongs to the NAD(P)-dependent epimerase/dehydratase family. HldD subfamily. In terms of assembly, homopentamer. Requires NADP(+) as cofactor.

It carries out the reaction ADP-D-glycero-beta-D-manno-heptose = ADP-L-glycero-beta-D-manno-heptose. It participates in nucleotide-sugar biosynthesis; ADP-L-glycero-beta-D-manno-heptose biosynthesis; ADP-L-glycero-beta-D-manno-heptose from D-glycero-beta-D-manno-heptose 7-phosphate: step 4/4. In terms of biological role, catalyzes the interconversion between ADP-D-glycero-beta-D-manno-heptose and ADP-L-glycero-beta-D-manno-heptose via an epimerization at carbon 6 of the heptose. This is ADP-L-glycero-D-manno-heptose-6-epimerase from Cupriavidus taiwanensis (strain DSM 17343 / BCRC 17206 / CCUG 44338 / CIP 107171 / LMG 19424 / R1) (Ralstonia taiwanensis (strain LMG 19424)).